The sequence spans 239 residues: MATTWPPRTVIRKSSGLRTLESALQRSGLGPVAGVDEVGRGACAGPLVVAACALGPNRYESLAALDDSKKLTEKTREKLFPLICRYALAYHVVFIPSVEVDRRGVHVANIEGMRRAVAGLSVRPGYVLSDGFRVPGLSVPSLPVIGGDAAAACIAAASVLAKVSRDRLMVAMDTQYPGYGFAEHKGYSTRAHTLALTQLGPCPEHRRSFINVRRVATRSNGAAAAEREADPPQERDGTG.

One can recognise an RNase H type-2 domain in the interval 30-221 (GPVAGVDEVG…VRRVATRSNG (192 aa)). A divalent metal cation-binding residues include D36, E37, and D130. Residues 219 to 239 (SNGAAAAEREADPPQERDGTG) form a disordered region. Basic and acidic residues predominate over residues 225–239 (AEREADPPQERDGTG).

Belongs to the RNase HII family. Requires Mn(2+) as cofactor. Mg(2+) is required as a cofactor.

Its subcellular location is the cytoplasm. The catalysed reaction is Endonucleolytic cleavage to 5'-phosphomonoester.. In terms of biological role, endonuclease that specifically degrades the RNA of RNA-DNA hybrids. This is Ribonuclease HII from Mycobacterium marinum (strain ATCC BAA-535 / M).